The sequence spans 232 residues: Putative N-acetylmannosamine-6-phosphate 2-epimerase (232 aa).

It belongs to the NanE family.

It carries out the reaction an N-acyl-D-glucosamine 6-phosphate = an N-acyl-D-mannosamine 6-phosphate. The protein operates within amino-sugar metabolism; N-acetylneuraminate degradation; D-fructose 6-phosphate from N-acetylneuraminate: step 3/5. Its function is as follows. Converts N-acetylmannosamine-6-phosphate (ManNAc-6-P) to N-acetylglucosamine-6-phosphate (GlcNAc-6-P). The polypeptide is Putative N-acetylmannosamine-6-phosphate 2-epimerase (Synechococcus elongatus (strain ATCC 33912 / PCC 7942 / FACHB-805) (Anacystis nidulans R2)).